The sequence spans 68 residues: Protein ShdD (68 aa).

Involved in the non-oxidative decarboxylation and detoxification of phenolic derivatives under anaerobic conditions, however the precise biochemical function of ShdD in metabolism of phenolic acid is unknown. This Sedimentibacter hydroxybenzoicus (Clostridium hydroxybenzoicum) protein is Protein ShdD.